We begin with the raw amino-acid sequence, 253 residues long: Small ribosomal subunit protein uS3 (253 aa).

Positions 21 to 92 (LNEFLTRELA…SVELYAEKVA (72 aa)) constitute a KH type-2 domain. The interval 211-253 (VEPKDEILPTTPISEQKGGKPDPQVPQQPPQQPPAMPPPVPTA) is disordered. Residues 233 to 253 (PQVPQQPPQQPPAMPPPVPTA) are compositionally biased toward pro residues.

This sequence belongs to the universal ribosomal protein uS3 family.

It is found in the cytoplasm. It localises to the nucleus. The protein localises to the nucleolus. Its subcellular location is the mitochondrion inner membrane. The protein resides in the cytoskeleton. It is found in the spindle. The catalysed reaction is 2'-deoxyribonucleotide-(2'-deoxyribose 5'-phosphate)-2'-deoxyribonucleotide-DNA = a 3'-end 2'-deoxyribonucleotide-(2,3-dehydro-2,3-deoxyribose 5'-phosphate)-DNA + a 5'-end 5'-phospho-2'-deoxyribonucleoside-DNA + H(+). Functionally, component of the small ribosomal subunit. The ribosome is a large ribonucleoprotein complex responsible for the synthesis of proteins in the cell. Has endonuclease activity and plays a role in repair of damaged DNA. Also involved in other processes including regulation of transcription, translation of its cognate mRNA, spindle formation and chromosome movement during mitosis, and apoptosis. This is Small ribosomal subunit protein uS3 (RPS3) from Ambystoma mexicanum (Axolotl).